Reading from the N-terminus, the 194-residue chain is Peptidyl-tRNA hydrolase (194 aa).

Position 16 (Tyr16) interacts with tRNA. The Proton acceptor role is filled by His21. Phe67, Asn69, and Asn115 together coordinate tRNA.

The protein belongs to the PTH family. As to quaternary structure, monomer.

The protein localises to the cytoplasm. It catalyses the reaction an N-acyl-L-alpha-aminoacyl-tRNA + H2O = an N-acyl-L-amino acid + a tRNA + H(+). In terms of biological role, hydrolyzes ribosome-free peptidyl-tRNAs (with 1 or more amino acids incorporated), which drop off the ribosome during protein synthesis, or as a result of ribosome stalling. Catalyzes the release of premature peptidyl moieties from peptidyl-tRNA molecules trapped in stalled 50S ribosomal subunits, and thus maintains levels of free tRNAs and 50S ribosomes. The sequence is that of Peptidyl-tRNA hydrolase from Shigella flexneri.